Here is a 105-residue protein sequence, read N- to C-terminus: MGRVTAPAPLEIEKTESAEEVFAVPEPDVPWVTIVHNDPVNLMSYVTYVFQTYFGYSKDKATKLMLDVHHKGRAVVSSGTREEMERDVQAMHGYGLWATLQQDRK.

Belongs to the ClpS family. In terms of assembly, binds to the N-terminal domain of the chaperone ClpA.

Involved in the modulation of the specificity of the ClpAP-mediated ATP-dependent protein degradation. The protein is ATP-dependent Clp protease adapter protein ClpS of Streptomyces avermitilis (strain ATCC 31267 / DSM 46492 / JCM 5070 / NBRC 14893 / NCIMB 12804 / NRRL 8165 / MA-4680).